A 3598-amino-acid polypeptide reads, in one-letter code: Dystrophin, isoforms A/C/F/G/H (3598 aa).

Residues 1 to 230 are actin-binding; that stretch reads MEPGILIDER…YVMCLYHAME (230 aa). Calponin-homology (CH) domains are found at residues 12-116 and 127-230; these read HIQK…LEFN and NGVE…HAME. A disordered region spans residues 233–297; that stretch reads RTRQQEQEQD…SGELKTHSMR (65 aa). Polar residues predominate over residues 267-286; it reads NDQTSLGLYTSDSAGSMEQR. Spectrin repeat units lie at residues 307 to 420, 423 to 525, 851 to 963, 1056 to 1170, 1173 to 1275, and 1381 to 1483; these read VEIS…KILM, AEFQ…KLQQ, QDFG…AIEN, SHID…LLEH, TQLG…LLEQ, and SYES…TLER. Disordered stretches follow at residues 1633 to 1696, 1716 to 1742, 1799 to 1854, 1878 to 1941, and 2204 to 2233; these read ARNT…VMPD, SLNP…SSPA, EDSD…ENTS, RDIL…EPLV, and GPRI…NEPS. Residues 1663-1679 are compositionally biased toward low complexity; that stretch reads SGESPSSAHTSSSESPT. Basic and acidic residues predominate over residues 1803–1816; it reads SSVRVDSQGKEMRR. Phosphoserine occurs at positions 1832 and 1838. Over residues 1834-1843 the composition is skewed to acidic residues; sequence NDEDSAEQEE. Basic and acidic residues predominate over residues 1878-1893; that stretch reads RDILRDSEEEEPKTPD. The segment covering 2218–2233 has biased composition (polar residues); it reads SAATMSCRSEYNNEPS. Spectrin repeat units lie at residues 2237 to 2363, 2366 to 2472, 2475 to 2576, 2579 to 2712, and 2715 to 2819; these read ALAG…QLKN, SDSQ…QLHA, HSLQ…RLES, EHWN…RLDE, and TKMR…VLCQ. The segment at 2655–2679 is disordered; sequence VSDTSDTEANHDSDSRYMSAEEQSR. Residues 2822 to 2852 form a disordered region; the sequence is AQQTHENGDDGRTTSNSGTIGPLPNLGQSVK. Residues 2849–2882 enclose the WW domain; that stretch reads QSVKPPWERATTAANVPYYIDHERETTHWDHPEM. A ZZ-type zinc finger spans residues 3107–3163; it reads KHQAKCNICKEYPIVGFRYRCLKCFNFDMCQKCFFFGRNAKNHKLTHPMHEYCTTTT. The Zn(2+) site is built by Cys-3112, Cys-3115, Cys-3127, Cys-3130, Cys-3136, Cys-3139, His-3149, and His-3153. Residue Ser-3207 is modified to Phosphoserine. Disordered regions lie at residues 3316-3344, 3387-3449, 3483-3545, and 3560-3598; these read EQSG…GEQG, DEPN…KGIM, LHQQ…QQHL, and ELES…ELQK. 2 stretches are compositionally biased toward polar residues: residues 3325–3337 and 3408–3439; these read NGMQ…MTGL and ALNS…QQNG. Low complexity predominate over residues 3485–3499; the sequence is QQQQQQLQQQPPQQQ. Positions 3505–3523 are enriched in gly residues; it reads GNGGMDISGGMQTSGGYLG. Residues 3534–3545 are compositionally biased toward low complexity; it reads SSLMQQQHQQHL. A compositionally biased stretch (acidic residues) spans 3560 to 3570; that stretch reads ELESINDDLED. Residues 3571–3589 are compositionally biased toward low complexity; the sequence is SSSSNTTNTTTTTTTTATT.

In terms of assembly, component of the dystrophin associated protein complex (DAPC). Interacts with Dg, via the Dg WW domain binding sites. As to expression, isoform A, isoform F and isoform G are expressed in the midgut endoderm of stage 12 embryos. In stage 16 embryos, expression is also seen in the pericardial cells, cells at the ectoderm segmental border and cells along the midline of the CNS. During embryogenesis, isoform A is also expressed in the visceral mesoderm, muscle attachment sites, mesectodermal cells at the midline, the gut, and throughout muscle fibers. In larvae, isoform A is found in all muscle fibers, but not detectable in the brain or neuropil.

The protein localises to the cell membrane. It localises to the sarcolemma. It is found in the cytoplasm. The protein resides in the cytoskeleton. In terms of biological role, required for the maintenance of appropriate synaptic retrograde communication and the stabilization of muscle cell architecture or physiology. Both det and Dg are required for maintenance of early dpp signaling in the presumptive crossvein. Isoform A is not required to maintain muscle integrity, but plays a role in neuromuscular homeostasis by regulating neurotransmitter release. May play a role in anchoring the cytoskeleton to the plasma membrane. This chain is Dystrophin, isoforms A/C/F/G/H (Dys), found in Drosophila melanogaster (Fruit fly).